The following is a 300-amino-acid chain: Ecto-ADP-ribosyltransferase 4 (300 aa).

The first 23 residues, 1-23 (MALWLPGGQLTLLLLLWVQQTPA), serve as a signal peptide directing secretion. The Extracellular portion of the chain corresponds to 24–269 (GSTEAPLKVD…QLLKACSKKC (246 aa)). 2 cysteine pairs are disulfide-bonded: Cys-48-Cys-259 and Cys-161-Cys-210. The TR mART core domain occupies 70-255 (KYYSRAWQKA…INLRSAGNMS (186 aa)). N-linked (GlcNAc...) asparagine glycans are attached at residues Asn-110 and Asn-157. An NAD(+)-binding site is contributed by Gln-185. Asn-201 is a glycosylation site (N-linked (GlcNAc...) asparagine). An NAD(+)-binding site is contributed by Ser-219. N-linked (GlcNAc...) asparagine glycosylation is present at Asn-253. The GPI-anchor amidated alanine moiety is linked to residue Ala-264. A propeptide spans 265–300 (CSKKCAPAPVVIGCLFLVTVVISSKSRAQRNLLAPF) (removed in mature form). A helical transmembrane segment spans residues 270–286 (APAPVVIGCLFLVTVVI). Over 287–300 (SSKSRAQRNLLAPF) the chain is Cytoplasmic.

It belongs to the Arg-specific ADP-ribosyltransferase family.

It localises to the membrane. The protein localises to the cell membrane. The catalysed reaction is L-arginyl-[protein] + NAD(+) = N(omega)-(ADP-D-ribosyl)-L-arginyl-[protein] + nicotinamide + H(+). The protein is Ecto-ADP-ribosyltransferase 4 (Art4) of Mus musculus (Mouse).